Consider the following 286-residue polypeptide: Aquaporin NIP4-1 (286 aa).

The next 2 membrane-spanning stretches (helical) occupy residues 59–79 and 86–106; these read VMVEGLASFLVVFWSCVAALM and LTFPMVCLVVAMTVAFVLSWL. An NPA 1 motif is present at residues 112 to 114; the sequence is NPA. The next 3 helical transmembrane spans lie at 133-153, 173-193, and 201-221; these read LYVAAQLAGSLLACLSVNAVM, LPFLMEFLASAVLMIVIATVA, and TVGGIAIGAAVGGLGLVIGPV. The NPA 2 signature appears at 227 to 229; it reads NPA. The helical transmembrane segment at 241 to 261 threads the bilayer; the sequence is YDGVWIYVVAPVAGMLVGALC.

Belongs to the MIP/aquaporin (TC 1.A.8) family. NIP (TC 1.A.8.12) subfamily. In terms of tissue distribution, expressed in leaves and at lower levels in roots.

The protein localises to the membrane. Functionally, aquaporins facilitate the transport of water and small neutral solutes across cell membranes. This is Aquaporin NIP4-1 (NIP4-1) from Oryza sativa subsp. japonica (Rice).